Consider the following 431-residue polypeptide: STE20-related kinase adapter protein alpha (431 aa).

Phosphoserine is present on residues serine 2 and serine 46. The Protein kinase domain maps to 69–379; it reads YELLTVIGKG…ASTLLNHSFF (311 aa). Residues 310 to 347 are disordered; the sequence is LTMSPSRSVANSGLSDSLTTSTPRPSNGDSPSHPYHRT. The segment covering 312 to 339 has biased composition (polar residues); sequence MSPSRSVANSGLSDSLTTSTPRPSNGDS. Residues threonine 329 and threonine 401 each carry the phosphothreonine; by LKB1 modification. Phosphothreonine is present on threonine 419.

Belongs to the protein kinase superfamily. STE Ser/Thr protein kinase family. STE20 subfamily. Component of a trimeric complex composed of STK11/LKB1, STRAD (STRADA or STRADB) and CAB39/MO25 (CAB39/MO25alpha or CAB39L/MO25beta): the complex tethers STK11/LKB1 in the cytoplasm and stimulates its catalytic activity.

The protein resides in the nucleus. It is found in the cytoplasm. Functionally, pseudokinase which, in complex with CAB39/MO25 (CAB39/MO25alpha or CAB39L/MO25beta), binds to and activates STK11/LKB1. Adopts a closed conformation typical of active protein kinases and binds STK11/LKB1 as a pseudosubstrate, promoting conformational change of STK11/LKB1 in an active conformation. The polypeptide is STE20-related kinase adapter protein alpha (STRADA) (Pongo abelii (Sumatran orangutan)).